We begin with the raw amino-acid sequence, 238 residues long: Ribonuclease PH (238 aa).

Residues Arg-86 and 124 to 126 (GTR) each bind phosphate.

It belongs to the RNase PH family. Homohexameric ring arranged as a trimer of dimers.

It catalyses the reaction tRNA(n+1) + phosphate = tRNA(n) + a ribonucleoside 5'-diphosphate. Its function is as follows. Phosphorolytic 3'-5' exoribonuclease that plays an important role in tRNA 3'-end maturation. Removes nucleotide residues following the 3'-CCA terminus of tRNAs; can also add nucleotides to the ends of RNA molecules by using nucleoside diphosphates as substrates, but this may not be physiologically important. Probably plays a role in initiation of 16S rRNA degradation (leading to ribosome degradation) during starvation. The sequence is that of Ribonuclease PH from Aliivibrio salmonicida (strain LFI1238) (Vibrio salmonicida (strain LFI1238)).